Here is a 99-residue protein sequence, read N- to C-terminus: Protein Tat (99 aa).

The segment at 1–24 (MDPVDPKLEPWNHPGSQPQTACNN) is interaction with human CREBBP. Residues 1–48 (MDPVDPKLEPWNHPGSQPQTACNNCYCKKCCYHCQMCFLKKGLGISYG) form a transactivation region. Zn(2+) is bound by residues Cys-22, Cys-25, and Cys-27. Residues 22–37 (CNNCYCKKCCYHCQMC) are cysteine-rich. Lys-28 is modified (N6-acetyllysine; by host PCAF). 4 residues coordinate Zn(2+): Cys-30, His-33, Cys-34, and Cys-37. Positions 38-48 (FLKKGLGISYG) are core. Over residues 48-58 (GRKKRSQRHRT) the composition is skewed to basic residues. The disordered stretch occupies residues 48–99 (GRKKRSQRHRTPASLQDHQNSISKQPLSRTHGDPTGPKEQKKEVASKTETDP). The Nuclear localization signal, RNA-binding (TAR), and protein transduction signature appears at 49–57 (RKKRSQRHR). The tract at residues 49–86 (RKKRSQRHRTPASLQDHQNSISKQPLSRTHGDPTGPKE) is interaction with the host capping enzyme RNGTT. An N6-acetyllysine; by host EP300 and GCN5L2 mark is found at Lys-50 and Lys-51. Arg-52 carries the asymmetric dimethylarginine; by host PRMT6 modification. Polar residues predominate over residues 60-75 (ASLQDHQNSISKQPLS). Lys-71 participates in a covalent cross-link: Glycyl lysine isopeptide (Lys-Gly) (interchain with G-Cter in ubiquitin). The segment covering 77–99 (THGDPTGPKEQKKEVASKTETDP) has biased composition (basic and acidic residues).

This sequence belongs to the lentiviruses Tat family. As to quaternary structure, interacts with host CCNT1. Associates with the P-TEFb complex composed at least of Tat, P-TEFb (CDK9 and CCNT1), TAR RNA, RNA Pol II. Recruits the HATs CREBBP, TAF1/TFIID, EP300, PCAF and GCN5L2. Interacts with host KAT5/Tip60; this interaction targets the latter to degradation. Interacts with the host deacetylase SIRT1. Interacts with host capping enzyme RNGTT; this interaction stimulates RNGTT. Binds to host KDR, and to the host integrins ITGAV/ITGB3 and ITGA5/ITGB1. Interacts with host KPNB1/importin beta-1 without previous binding to KPNA1/importin alpha-1. Interacts with EIF2AK2. Interacts with host nucleosome assembly protein NAP1L1; this interaction may be required for the transport of Tat within the nucleus, since the two proteins interact at the nuclear rim. Interacts with host C1QBP/SF2P32; this interaction involves lysine-acetylated Tat. Interacts with the host chemokine receptors CCR2, CCR3 and CXCR4. Interacts with host DPP4/CD26; this interaction may trigger an anti-proliferative effect. Interacts with host LDLR. Interacts with the host extracellular matrix metalloproteinase MMP1. Interacts with host PRMT6; this interaction mediates Tat's methylation. Interacts with, and is ubiquitinated by MDM2/Hdm2. Interacts with host PSMC3 and HTATIP2. Interacts with STAB1; this interaction may overcome SATB1-mediated repression of IL2 and IL2RA (interleukin) in T cells by binding to the same domain than HDAC1. Interacts (when acetylated) with human CDK13, thereby increasing HIV-1 mRNA splicing and promoting the production of the doubly spliced HIV-1 protein Nef. Interacts with host TBP; this interaction modulates the activity of transcriptional pre-initiation complex. Interacts with host RELA. Interacts with host PLSCR1; this interaction negatively regulates Tat transactivation activity by altering its subcellular distribution. In terms of processing, asymmetrical arginine methylation by host PRMT6 seems to diminish the transactivation capacity of Tat and affects the interaction with host CCNT1. Post-translationally, acetylation by EP300, CREBBP, GCN5L2/GCN5 and PCAF regulates the transactivation activity of Tat. EP300-mediated acetylation of Lys-50 promotes dissociation of Tat from the TAR RNA through the competitive binding to PCAF's bromodomain. In addition, the non-acetylated Tat's N-terminus can also interact with PCAF. PCAF-mediated acetylation of Lys-28 enhances Tat's binding to CCNT1. Lys-50 is deacetylated by SIRT1. Polyubiquitination by host MDM2 does not target Tat to degradation, but activates its transactivation function and fosters interaction with CCNT1 and TAR RNA. In terms of processing, phosphorylated by EIF2AK2 on serine and threonine residues adjacent to the basic region important for TAR RNA binding and function. Phosphorylation of Tat by EIF2AK2 is dependent on the prior activation of EIF2AK2 by dsRNA.

The protein localises to the host nucleus. It localises to the host nucleolus. The protein resides in the host cytoplasm. It is found in the secreted. Transcriptional activator that increases RNA Pol II processivity, thereby increasing the level of full-length viral transcripts. Recognizes a hairpin structure at the 5'-LTR of the nascent viral mRNAs referred to as the transactivation responsive RNA element (TAR) and recruits the cyclin T1-CDK9 complex (P-TEFb complex) that will in turn hyperphosphorylate the RNA polymerase II to allow efficient elongation. The CDK9 component of P-TEFb and other Tat-activated kinases hyperphosphorylate the C-terminus of RNA Pol II that becomes stabilized and much more processive. Other factors such as HTATSF1/Tat-SF1, SUPT5H/SPT5, and HTATIP2 are also important for Tat's function. Besides its effect on RNA Pol II processivity, Tat induces chromatin remodeling of proviral genes by recruiting the histone acetyltransferases (HATs) CREBBP, EP300 and PCAF to the chromatin. This also contributes to the increase in proviral transcription rate, especially when the provirus integrates in transcriptionally silent region of the host genome. To ensure maximal activation of the LTR, Tat mediates nuclear translocation of NF-kappa-B by interacting with host RELA. Through its interaction with host TBP, Tat may also modulate transcription initiation. Tat can reactivate a latently infected cell by penetrating in it and transactivating its LTR promoter. In the cytoplasm, Tat is thought to act as a translational activator of HIV-1 mRNAs. Functionally, extracellular circulating Tat can be endocytosed by surrounding uninfected cells via the binding to several surface receptors such as CD26, CXCR4, heparan sulfate proteoglycans (HSPG) or LDLR. Neurons are rarely infected, but they internalize Tat via their LDLR. Through its interaction with nuclear HATs, Tat is potentially able to control the acetylation-dependent cellular gene expression. Modulates the expression of many cellular genes involved in cell survival, proliferation or in coding for cytokines or cytokine receptors. Tat plays a role in T-cell and neurons apoptosis. Tat induced neurotoxicity and apoptosis probably contribute to neuroAIDS. Circulating Tat also acts as a chemokine-like and/or growth factor-like molecule that binds to specific receptors on the surface of the cells, affecting many cellular pathways. In the vascular system, Tat binds to ITGAV/ITGB3 and ITGA5/ITGB1 integrins dimers at the surface of endothelial cells and competes with bFGF for heparin-binding sites, leading to an excess of soluble bFGF. This chain is Protein Tat, found in Homo sapiens (Human).